Here is a 191-residue protein sequence, read N- to C-terminus: Ribosomal RNA small subunit methyltransferase G (191 aa).

Residues Gly-62, Phe-67, 111–112 (IE), and Arg-124 each bind S-adenosyl-L-methionine.

This sequence belongs to the methyltransferase superfamily. RNA methyltransferase RsmG family.

It is found in the cytoplasm. The enzyme catalyses guanosine(527) in 16S rRNA + S-adenosyl-L-methionine = N(7)-methylguanosine(527) in 16S rRNA + S-adenosyl-L-homocysteine. Functionally, specifically methylates the N7 position of guanine in position 527 of 16S rRNA. The protein is Ribosomal RNA small subunit methyltransferase G of Rickettsia akari (strain Hartford).